Reading from the N-terminus, the 785-residue chain is Protein translocase subunit SecA 3 (785 aa).

ATP contacts are provided by residues glutamine 98, 116-120 (GEGKT), and aspartate 505.

The protein belongs to the SecA family. Monomer and homodimer. Part of the essential Sec protein translocation apparatus which comprises SecA, SecYEG and auxiliary proteins SecDF. Other proteins may also be involved.

The protein localises to the cell membrane. It is found in the cytoplasm. It catalyses the reaction ATP + H2O + cellular proteinSide 1 = ADP + phosphate + cellular proteinSide 2.. Part of the Sec protein translocase complex. Interacts with the SecYEG preprotein conducting channel. Has a central role in coupling the hydrolysis of ATP to the transfer of proteins into and across the cell membrane, serving as an ATP-driven molecular motor driving the stepwise translocation of polypeptide chains across the membrane. The sequence is that of Protein translocase subunit SecA 3 from Mycolicibacterium vanbaalenii (strain DSM 7251 / JCM 13017 / BCRC 16820 / KCTC 9966 / NRRL B-24157 / PYR-1) (Mycobacterium vanbaalenii).